Here is a 411-residue protein sequence, read N- to C-terminus: Class E basic helix-loop-helix protein 40 (411 aa).

The segment at 1–21 is disordered; the sequence is MERIPSAQPPPTCLPKTPGLE. The tract at residues 1 to 139 is essential for interaction with BMAL1, E-box binding and repressor activity against the CLOCK-BMAL1 heterodimer; the sequence is MERIPSAQPP…LSGKNIEAGQ (139 aa). Residues 52–107 form the bHLH domain; it reads TYKLPHRLIEKKRRDRINECIAQLKDLLPEHLKLTTLGHLEKAVVLELTLKHVKAL. Residues 75–79 form a necessary for interaction with RXRA and repressor activity against RXRA region; the sequence is LKDLL. Positions 142–175 constitute an Orange domain; it reads FCSGFQTCAREVLQYLAKHENTRDLKSSQLVTHL. A Glycyl lysine isopeptide (Lys-Gly) (interchain with G-Cter in SUMO1, SUMO2 and SUMO3) cross-link involves residue K159. K167 participates in a covalent cross-link: Glycyl lysine isopeptide (Lys-Gly) (interchain with G-Cter in SUMO2). The segment at 186 to 293 is disordered; that stretch reads SASRKPLDSA…EPPTKKSRMQ (108 aa). S235 carries the post-translational modification Phosphoserine. A compositionally biased stretch (basic and acidic residues) spans 248–271; it reads ELEKGDLRSEQPYFKSDHGRRFTV. Residue K279 forms a Glycyl lysine isopeptide (Lys-Gly) (interchain with G-Cter in SUMO1); alternate linkage. A Glycyl lysine isopeptide (Lys-Gly) (interchain with G-Cter in SUMO1, SUMO2 and SUMO3); alternate cross-link involves residue K279. Residue K279 forms a Glycyl lysine isopeptide (Lys-Gly) (interchain with G-Cter in SUMO2); alternate linkage. A Glycyl lysine isopeptide (Lys-Gly) (interchain with G-Cter in SUMO2) cross-link involves residue K288. Residue S383 is modified to Phosphoserine.

Homodimer. Heterodimer with BHLHE41/DEC2. Interacts with TCF3/E47. Interacts with ubiquitin-conjugating enzyme UBE2I/UBC9. Interacts with HDAC1, SUMO1, RXRA and BMAL1. Ubiquitinated; which may lead to proteasomal degradation. Post-translationally, sumoylation inhibits its ubiquitination and promotes its negative regulation of the CLOCK-BMAL1 heterodimer transcriptional activator activity. As to expression, expressed in heart, spleen, lung, liver, muscle, kidney, uterus and gut. Highly expressed in the cerebral cortex, especially in the fifth layer, thalamus, superior colliculus, olfactory bulb, piriform cortex, hippocampus and hypothalamic nuclei.

The protein resides in the cytoplasm. It localises to the nucleus. Its function is as follows. Transcriptional repressor involved in the regulation of the circadian rhythm by negatively regulating the activity of the clock genes and clock-controlled genes. Acts as the negative limb of a novel autoregulatory feedback loop (DEC loop) which differs from the one formed by the PER and CRY transcriptional repressors (PER/CRY loop). Both these loops are interlocked as it represses the expression of PER1/2 and in turn is repressed by PER1/2 and CRY1/2. Represses the activity of the circadian transcriptional activator: CLOCK-BMAL1|BMAL2 heterodimer by competing for the binding to E-box elements (5'-CACGTG-3') found within the promoters of its target genes. Negatively regulates its own expression and the expression of DBP and BHLHE41/DEC2. Acts as a corepressor of RXR and the RXR-LXR heterodimers and represses the ligand-induced RXRA and NR1H3/LXRA transactivation activity. May be involved in the regulation of chondrocyte differentiation via the cAMP pathway. Represses the transcription of NR0B2 and attentuates the transactivation of NR0B2 by the CLOCK-BMAL1 complex. Drives the circadian rhythm of blood pressure through transcriptional repression of ATP1B1 in the cardiovascular system. This Rattus norvegicus (Rat) protein is Class E basic helix-loop-helix protein 40 (Bhlhe40).